A 341-amino-acid chain; its full sequence is Ketol-acid reductoisomerase (NADP(+)) (341 aa).

One can recognise a KARI N-terminal Rossmann domain in the interval 1-182 (MTEMFYDDDA…GGTRAGVIKT (182 aa)). Residues 25-28 (YGSQ), lysine 48, serine 51, serine 53, and 83-86 (DQHQ) contribute to the NADP(+) site. The active site involves histidine 108. Position 134 (glycine 134) interacts with NADP(+). One can recognise a KARI C-terminal knotted domain in the interval 183-328 (TFTEETETDL…RELRGLFSWQ (146 aa)). Residues aspartate 191, glutamate 195, glutamate 227, and glutamate 231 each contribute to the Mg(2+) site. Serine 252 contacts substrate.

Belongs to the ketol-acid reductoisomerase family. Mg(2+) is required as a cofactor.

It carries out the reaction (2R)-2,3-dihydroxy-3-methylbutanoate + NADP(+) = (2S)-2-acetolactate + NADPH + H(+). It catalyses the reaction (2R,3R)-2,3-dihydroxy-3-methylpentanoate + NADP(+) = (S)-2-ethyl-2-hydroxy-3-oxobutanoate + NADPH + H(+). The protein operates within amino-acid biosynthesis; L-isoleucine biosynthesis; L-isoleucine from 2-oxobutanoate: step 2/4. It participates in amino-acid biosynthesis; L-valine biosynthesis; L-valine from pyruvate: step 2/4. Functionally, involved in the biosynthesis of branched-chain amino acids (BCAA). Catalyzes an alkyl-migration followed by a ketol-acid reduction of (S)-2-acetolactate (S2AL) to yield (R)-2,3-dihydroxy-isovalerate. In the isomerase reaction, S2AL is rearranged via a Mg-dependent methyl migration to produce 3-hydroxy-3-methyl-2-ketobutyrate (HMKB). In the reductase reaction, this 2-ketoacid undergoes a metal-dependent reduction by NADPH to yield (R)-2,3-dihydroxy-isovalerate. In Arthrobacter sp. (strain FB24), this protein is Ketol-acid reductoisomerase (NADP(+)).